The chain runs to 209 residues: uncharacterized protein (209 aa).

Residues 41 to 76 (NVENLCLIRNKLKTDIENLLENKIDVENKLLVLRNQ) are a coiled coil.

This is an uncharacterized protein from Acanthamoeba polyphaga (Amoeba).